A 161-amino-acid chain; its full sequence is Ribosome maturation factor RimP (161 aa).

This sequence belongs to the RimP family.

It is found in the cytoplasm. Its function is as follows. Required for maturation of 30S ribosomal subunits. In Rickettsia africae (strain ESF-5), this protein is Ribosome maturation factor RimP.